The primary structure comprises 488 residues: Rhamnulokinase (488 aa).

An ATP-binding site is contributed by 13-17; that stretch reads ASSGR. A disulfide bridge connects residues Cys-68 and Cys-222. Substrate is bound by residues Gly-83 and 236–238; that span reads HDT. Residue Asp-237 is the Proton acceptor of the active site. Thr-259 contacts ATP. Asn-296 is a binding site for substrate. An ATP-binding site is contributed by Gln-304. Cys-353 and Cys-370 form a disulfide bridge. Position 402 (Gly-402) interacts with ATP. Residues Cys-413 and Cys-417 are joined by a disulfide bond.

It belongs to the rhamnulokinase family. Mg(2+) is required as a cofactor.

The catalysed reaction is L-rhamnulose + ATP = L-rhamnulose 1-phosphate + ADP + H(+). It functions in the pathway carbohydrate degradation; L-rhamnose degradation; glycerone phosphate from L-rhamnose: step 2/3. Functionally, involved in the catabolism of L-rhamnose (6-deoxy-L-mannose). Catalyzes the transfer of the gamma-phosphate group from ATP to the 1-hydroxyl group of L-rhamnulose to yield L-rhamnulose 1-phosphate. The sequence is that of Rhamnulokinase from Klebsiella pneumoniae subsp. pneumoniae (strain ATCC 700721 / MGH 78578).